The chain runs to 181 residues: Probable pyruvoyl-dependent arginine decarboxylase (181 aa).

Ser43 carries the post-translational modification Pyruvic acid (Ser).

The protein belongs to the PdaD family. The cofactor is pyruvate.

It catalyses the reaction L-arginine + H(+) = agmatine + CO2. This is Probable pyruvoyl-dependent arginine decarboxylase from Chlorobium limicola (strain DSM 245 / NBRC 103803 / 6330).